The sequence spans 597 residues: Elongation factor 4 (597 aa).

Residues 2-184 form the tr-type G domain; it reads KNIRNFSIIA…SIVEHLPAPE (183 aa). GTP contacts are provided by residues 14–19 and 131–134; these read DHGKST and NKID.

Belongs to the TRAFAC class translation factor GTPase superfamily. Classic translation factor GTPase family. LepA subfamily.

The protein resides in the cell inner membrane. It catalyses the reaction GTP + H2O = GDP + phosphate + H(+). Its function is as follows. Required for accurate and efficient protein synthesis under certain stress conditions. May act as a fidelity factor of the translation reaction, by catalyzing a one-codon backward translocation of tRNAs on improperly translocated ribosomes. Back-translocation proceeds from a post-translocation (POST) complex to a pre-translocation (PRE) complex, thus giving elongation factor G a second chance to translocate the tRNAs correctly. Binds to ribosomes in a GTP-dependent manner. The polypeptide is Elongation factor 4 (Desulfotalea psychrophila (strain LSv54 / DSM 12343)).